Consider the following 1676-residue polypeptide: MEDSQRGNASMMSMMDDPFVVSPEGARDPPSTNQYSTFDAQLFNLDASTPAQAKRALEAHLAETERRLEEASKLGTALVEQRKDLEDKLREVEQQQEEGQIGEELRRKLADLEREYNEIGQETARAFLAPKRLAGGDDGHLGTPSMDQKSPLHSALFAGQATNSPSKVSVPSRKSRNQSNRVHDIEFATEISTSLLAQVRQLQSLLAEREETLKTVNLEKSRLELEAEGYAQRIRALDESEERYKDENWALETKIHELMAAVKDVTDRETKLTSSLGAATAEKSAMERELEDLKQANAKLIEDHTAAQKANDAEINTLRRNLSAGDAERLTLQRKLEDMNTQNQELAKAVAMRLRQQEAESTREVVRPHDSEDEEQATPENSPPPSPNKFTPRHNHLETETLRSSLGHAHRMIQNLRSTIHREKTEKIELKRMLQEARDEVEQRRRDSVAANGPTNKRQKTKAETRKPARPDLLGAGRKKAEVEIHDSDWESNAGDISPTHKASNDSRDRRGDQPIDDRSDAYHTATEADDPFETANERETTTESEAFQTGVESMAGDSTDSDELTETEDRVQRTPRGRVSSMTLAKARDRTSYYSTASTSADEGDSTDPGTPSISQFSTPRYRLRKKRSVLRKIRPSGEAPMAFNSRPSSARESPSTSFTRDTSAAPEGQSLFAELAEVDGDEDDFGPPMQFEAASPSTPRMLPGFDSRRPSAVTVELPSKPDMVDSGVMTDPWEPNLHLASQTDDETVISVPVTPDKPTMSDASTGMDVVESPSLVHSSTQWTPLKPNAETSDDHVLSVPTPPKMAWDGQTLNEERKVDIPDSPTTQRELNISSVSFEETEPVAPSFPELRTAFFVGSTTEPVAAPVPVPPEVALSPISSQTTQPTEPVIPAPPEPEPIYVPEMAFSQILVEDTLPILAKLPEPAPERVFAEQGTSTDIAELSVSAISSEQTEPVEPVYEPKQDVAIVAEAVPEGPLSFVEQGTNTDDVEISFPAISSVETEPVAPVRETKDDVPEPVLSLTEQGTSTDTVEFSVSSISSEETEPVEPIREAKEEAAAVDDVASESTHPVLSIFLTPPAYTEPTAPKLQEAVIPPAPQLALSTVSSVETPPVQYTPDVLILPTPPALDENTPPSVMASTAKATKSAPPLVVVDDNTDKGTADGLVTQQNGVTLPLGAISGNAAPRRARSGSSNQADQGAQTILSSKQIDQLLIDRASVRPLSPPDSDKLNEMSNSPFATPKARSRPVPQASNASLHKRPGSAASQASSVQIHPPLPADHKEAIMAAEKKSIDQRPASAGLMGPPLAPASAVRASSQQRPRTPNESALQVGSAKTTTSRASVRRDSHMSRRSSVSSFASELEERFNMQPNPPFAPQGYSTGTDPRMIQAITQTMIGEFLWKYTRRAVSGEISNTRHRRYFWVHPYTRTLYWSEHDPQSAGKSEGRTKSVSIEAVRVVADDNPYPPGLHCKSLEVVSPGRRIRFTATTSQRHETWFNALSYLLVRNGPEDEEAENGVTLDDIDEFNPGFRSRSRQTARMSVSSSQSRGTRGLPKQRSGSAMSLRPSVTPGRASPYPPSHYSDQARQASSSRLSTIFNSTIKGSFGRKGPYAASSLNEDSIHNHDDSVEDLRHMMDRGDDVDRLENVRACCDGKHDVSSLSRTSRYSPRANRIHSHH.

A compositionally biased stretch (polar residues) spans 1–11 (MEDSQRGNASM). Residues 1–35 (MEDSQRGNASMMSMMDDPFVVSPEGARDPPSTNQY) are disordered. Residues 51-127 (AQAKRALEAH…EIGQETARAF (77 aa)) are a coiled coil. Disordered stretches follow at residues 160–180 (QATN…NQSN), 353–394 (RLRQ…TPRH), 439–712 (DEVE…SRRP), 1027–1050 (GTST…PVEP), 1176–1201 (PLGA…DQGA), 1220–1270 (VRPL…QASS), and 1297–1354 (PASA…RRSS). The span at 163 to 172 (NSPSKVSVPS) shows a compositional bias: low complexity. Coiled-coil stretches lie at residues 193–359 (TSLL…QQEA) and 408–453 (HAHR…AANG). Basic and acidic residues-rich tracts occupy residues 355-370 (RQQE…RPHD), 439-448 (DEVEQRRRDS), 461-470 (TKAETRKPAR), 479-489 (KKAEVEIHDSD), and 503-522 (ASND…RSDA). The span at 593–602 (SYYSTASTSA) shows a compositional bias: low complexity. Polar residues predominate over residues 609-620 (DPGTPSISQFST). Residues 623–636 (YRLRKKRSVLRKIR) show a composition bias toward basic residues. The span at 647–664 (SRPSSARESPSTSFTRDT) shows a compositional bias: polar residues. Residues 678–687 (AEVDGDEDDF) show a composition bias toward acidic residues. Over residues 1032 to 1042 (TVEFSVSSISS) the composition is skewed to low complexity. Positions 1191–1201 (SGSSNQADQGA) are enriched in polar residues. Polar residues predominate over residues 1314–1341 (RASSQQRPRTPNESALQVGSAKTTTSRA). In terms of domain architecture, PH spans 1393–1504 (QTMIGEFLWK…WFNALSYLLV (112 aa)). Positions 1511–1524 (EEAENGVTLDDIDE) are enriched in acidic residues. Disordered stretches follow at residues 1511-1589 (EEAE…QASS) and 1654-1676 (HDVS…HSHH). Polar residues-rich tracts occupy residues 1534-1548 (RQTA…QSRG) and 1580-1589 (YSDQARQASS).

It is found in the membrane. Functionally, required for nuclear positioning and completion of asexual development. This chain is Anucleate primary sterigmata protein A (apsA), found in Emericella nidulans (strain FGSC A4 / ATCC 38163 / CBS 112.46 / NRRL 194 / M139) (Aspergillus nidulans).